The primary structure comprises 273 residues: Large ribosomal subunit protein uL2 (273 aa).

Residues 228 to 273 (VDHPHGGGEGKTSGGRHPVTPWGFPTKGKKTRKNKRTSKFIVKKRK) are disordered. Over residues 254 to 273 (KGKKTRKNKRTSKFIVKKRK) the composition is skewed to basic residues.

Belongs to the universal ribosomal protein uL2 family. Part of the 50S ribosomal subunit. Forms a bridge to the 30S subunit in the 70S ribosome.

In terms of biological role, one of the primary rRNA binding proteins. Required for association of the 30S and 50S subunits to form the 70S ribosome, for tRNA binding and peptide bond formation. It has been suggested to have peptidyltransferase activity; this is somewhat controversial. Makes several contacts with the 16S rRNA in the 70S ribosome. The protein is Large ribosomal subunit protein uL2 of Rickettsia africae (strain ESF-5).